Here is a 443-residue protein sequence, read N- to C-terminus: ATP-dependent protease ATPase subunit HslU (443 aa).

Residues I20, 62 to 67, D255, E321, and R393 each bind ATP; that span reads GVGKTE.

This sequence belongs to the ClpX chaperone family. HslU subfamily. In terms of assembly, a double ring-shaped homohexamer of HslV is capped on each side by a ring-shaped HslU homohexamer. The assembly of the HslU/HslV complex is dependent on binding of ATP.

Its subcellular location is the cytoplasm. ATPase subunit of a proteasome-like degradation complex; this subunit has chaperone activity. The binding of ATP and its subsequent hydrolysis by HslU are essential for unfolding of protein substrates subsequently hydrolyzed by HslV. HslU recognizes the N-terminal part of its protein substrates and unfolds these before they are guided to HslV for hydrolysis. This is ATP-dependent protease ATPase subunit HslU from Helicobacter acinonychis (strain Sheeba).